Here is a 292-residue protein sequence, read N- to C-terminus: Syntaxin-19 (292 aa).

Basic and acidic residues predominate over residues 1–24; it reads MKDRLPELKQRTKETELSKDKDVP. Residues 1-28 form a disordered region; that stretch reads MKDRLPELKQRTKETELSKDKDVPTTEA. Residues 46–122 adopt a coiled-coil conformation; the sequence is VAERHLHEIQ…VKEVKKSEDE (77 aa). Residues 209–271 enclose the t-SNARE coiled-coil homology domain; that stretch reads LSEIEQRHKE…NTTKEKFGLA (63 aa).

It belongs to the syntaxin family. Interacts with EGFR.

It is found in the cell membrane. Its subcellular location is the cytoplasm. In terms of biological role, plays a role in endosomal trafficking of the epidermal growth factor receptor (EGFR). The chain is Syntaxin-19 (STX19) from Bos taurus (Bovine).